We begin with the raw amino-acid sequence, 145 residues long: MSLAEFDADVVINAQNCIVGRVASEVAQRALGGETVAIVNVEDAVITGSEEDVMSVYETRSELGSDQGPAYPSRPDGIFKRAVRGMLPYKSDRGREALSNVRTYVGNPYDDDGEAIDGTTLDRLSNIKFLSLGEVSANLGATVTW.

The protein belongs to the universal ribosomal protein uL13 family. In terms of assembly, part of the 50S ribosomal subunit.

This protein is one of the early assembly proteins of the 50S ribosomal subunit, although it is not seen to bind rRNA by itself. It is important during the early stages of 50S assembly. The polypeptide is Large ribosomal subunit protein uL13 (Haloquadratum walsbyi (strain DSM 16790 / HBSQ001)).